Consider the following 323-residue polypeptide: tRNA dimethylallyltransferase (323 aa).

Position 32-39 (32-39 (GPTASGKS)) interacts with ATP. 34-39 (TASGKS) contacts substrate. Positions 57–60 (DSMQ) are interaction with substrate tRNA.

This sequence belongs to the IPP transferase family. As to quaternary structure, monomer. The cofactor is Mg(2+).

The enzyme catalyses adenosine(37) in tRNA + dimethylallyl diphosphate = N(6)-dimethylallyladenosine(37) in tRNA + diphosphate. In terms of biological role, catalyzes the transfer of a dimethylallyl group onto the adenine at position 37 in tRNAs that read codons beginning with uridine, leading to the formation of N6-(dimethylallyl)adenosine (i(6)A). The polypeptide is tRNA dimethylallyltransferase (Rhodopseudomonas palustris (strain BisB5)).